The chain runs to 324 residues: Integrin-binding sialoprotein (324 aa).

The signal sequence occupies residues 1–16; that stretch reads MKTALILLSILGMACA. Phosphoserine is present on residues S31, S67, S75, S76, and S95. Disordered stretches follow at residues 60 to 228 and 243 to 263; these read VQGG…GREL and QQTT…RKSS. Residues 66–105 show a composition bias toward acidic residues; sequence SSEENGDGDSSEEEGEEEETSNEEENNEDSEGNEDQEAEA. A compositionally biased stretch (polar residues) spans 106-130; the sequence is ENSTLSTLSGVTASYGAETTPQAQT. N107 carries N-linked (GlcNAc...) asparagine glycosylation. The segment covering 141–154 has biased composition (basic and acidic residues); the sequence is KAGDAESRAPKVKE. S155 is modified (phosphoserine). Acidic residues predominate over residues 155–179; the sequence is SDEEEEEEEEEEENENEEAEVDENE. N-linked (GlcNAc...) asparagine glycans are attached at residues N183, N188, and N196. A compositionally biased stretch (acidic residues) spans 203–213; it reads NGEEAEAEEAS. Residues 253-263 are compositionally biased toward polar residues; sequence GTTSPPIRKSS. Residues 293 to 295 carry the Integrin-binding motif motif; it reads RGD. Sulfotyrosine occurs at positions 320 and 321.

As to quaternary structure, monomer. Interacts with integrins; the interaction promotes cell adhesion.

It localises to the secreted. Functionally, binds tightly to hydroxyapatite. Appears to form an integral part of the mineralized matrix. Probably important to cell-matrix interaction. Promotes adhesion and migration of various cells via the alpha-V/beta-3 integrin receptor (ITGAV:ITGB3). This Mus musculus (Mouse) protein is Integrin-binding sialoprotein (Ibsp).